The primary structure comprises 198 residues: Small ribosomal subunit protein uS5 (198 aa).

Residues 46–109 form the S5 DRBM domain; it reads LEDDVLEISM…NNAKLNIFKV (64 aa).

Belongs to the universal ribosomal protein uS5 family. Part of the 30S ribosomal subunit. Contacts protein S4.

Functionally, with S4 and S12 plays an important role in translational accuracy. The protein is Small ribosomal subunit protein uS5 of Archaeoglobus fulgidus (strain ATCC 49558 / DSM 4304 / JCM 9628 / NBRC 100126 / VC-16).